The following is a 1663-amino-acid chain: Complement C3 (1663 aa).

An N-terminal signal peptide occupies residues 1–24; that stretch reads MGPASGSQLLVLLLLLASSPLALG. Ser40 bears the Phosphoserine mark. 13 disulfides stabilise this stretch: Cys559-Cys816, Cys626-Cys661, Cys693-Cys720, Cys694-Cys727, Cys707-Cys728, Cys873-Cys1513, Cys1101-Cys1158, Cys1358-Cys1489, Cys1389-Cys1458, Cys1506-Cys1511, Cys1518-Cys1590, Cys1537-Cys1661, and Cys1637-Cys1646. Phosphoserine is present on Ser671. Residues 693–728 form the Anaphylatoxin-like domain; the sequence is CCEDGMRDIPMRYSCQRRARLITQGENCIKAFIDCC. Residue Asn939 is glycosylated (N-linked (GlcNAc...) asparagine). Ser968 bears the Phosphoserine mark. The isoglutamyl cysteine thioester (Cys-Gln) cross-link spans 1010-1013; it reads CGEQ. Position 1321 is a phosphoserine (Ser1321). The NTR domain occupies 1518–1661; the sequence is CFMQQSQEKI…FTESMVVYGC (144 aa). The residue at position 1573 (Ser1573) is a Phosphoserine. N-linked (GlcNAc...) asparagine glycosylation is present at Asn1617. The segment at 1634 to 1659 is interaction with CFP/properdin; sequence AEECQDQKYQKQCEELGAFTESMVVY.

As to quaternary structure, in absence of complement activation, the C3 precursor is first processed by the removal of 4 Arg residues, forming two chains, beta and alpha, linked by a disulfide bond. Complement C3b is composed of complement C3b and complement C3 beta chains that are associated via disulfide bonds. Non-enzymatic component of the C5 convertase, also named C4bC2bC3b, composed of the serine protease complement C2b (C2), complement C3b, as well as complement C4b (C4). Non-enzymatic component of the C5 convertase of the alternative complement pathways composed of the serine protease complement CFB and complement C3b. Interacts with CFP; interaction takes place together with CFB in the alternative complement system and allows the complex to become active. Interacts with CR1 (via Sushi 8 and Sushi 9 domains). Interacts with CFH. In terms of assembly, interacts with CFH. Interacts with CR2. As to quaternary structure, during pregnancy, C3dg exists as a complex (probably a 2:2:2 heterohexamer) with AGT and the proform of PRG2. Interacts with CR2 (via the N-terminal Sushi domains 1 and 2). Post-translationally, C3 precursor is first processed by the removal of 4 Arg residues, forming two chains, beta and alpha, linked by a disulfide bond. During activation of the complement systems, the alpha chain is cleaved into C3a and C3b by the C3 convertase: C3b stays linked to the beta chain, while C3a is released in the plasma. The alpha chain is cleaved by the serine protease complement C2b component of the C3 convertase to generate C3a and C3b following activation by the classical, lectin and GZMK complement systems. The alpha chain is cleaved by CFB component of the C3 convertase to generate C3a and C3b following activation by the alternative complement system. In terms of processing, C3a is further processed by carboxypeptidases to release the C-terminal arginine residue generating the acylation stimulating protein (ASP). Levels of ASP are increased in adipocytes in the postprandial period and by insulin and dietary chylomicrons. Complement C3b is rapidly split in two positions by factor I (CFI) and a cofactor (CFH) to form iC3b (inactivated C3b) and C3f which is released. CFI and CFH catalyze proteolytic degradation of already-deposited complement C3b. Then iC3b is slowly cleaved (possibly by CFI) to form C3c (beta chain + alpha' chain fragment 1 + alpha' chain fragment 2), C3dg and C3f. Other proteases produce other fragments such as C3d or C3g. Post-translationally, upon activation, the internal thioester bond reacts with carbohydrate antigens on the target surface to form amide or ester bonds, leading to covalent association with the surface of pathogens. In terms of processing, complement C3b interacts with complement C4b via a thioester linkage. Phosphorylated by FAM20C in the extracellular medium.

The protein resides in the secreted. It is found in the cell surface. With respect to regulation, complement activation is inhibited by VSIG4. Its function is as follows. Precursor of non-enzymatic components of the classical, alternative, lectin and GZMK complement pathways, which consist in a cascade of proteins that leads to phagocytosis and breakdown of pathogens and signaling that strengthens the adaptive immune system. Functionally, non-enzymatic component of C5 convertase. Generated following cleavage by C3 convertase, it covalently attaches to the surface of pathogens, where it acts as an opsonin that marks the surface of antigens for removal. Complement C3b binds covalently via its reactive thioester, to cell surface carbohydrates or immune aggregates. Together with complement C4b, it then recruits the serine protease complement C2b to form the C5 convertase, which cleaves and activate C5, the next component of the complement pathways. In the alternative complement pathway, recruits the serine protease CFB to form the C5 convertase that cleaves and activates C5. In terms of biological role, mediator of local inflammatory process released following cleavage by C3 convertase. Acts by binding to its receptor, C3AR1, activating G protein-coupled receptor signaling, promoting the phosphorylation, ARRB2-mediated internalization and endocytosis of C3AR1. C3a anaphylatoxin stimulates the activation of immune cells such as mast cells and basophilic leukocytes to release inflammation agents, such as cytokines, chemokines and histamine, which promote inflammation development. Also acts as potent chemoattractant for the migration of macrophages and neutrophils to the inflamed tissues, resulting in neutralization of the inflammatory triggers by multiple ways, such as phagocytosis and generation of reactive oxidants. Adipogenic hormone that stimulates triglyceride synthesis and glucose transport in adipocytes, regulating fat storage and playing a role in postprandial triglyceride clearance. Appears to stimulate triglyceride synthesis via activation of the PLC, MAPK and AKT signaling pathways. Acts by binding to its receptor, C5AR2, activating G protein-coupled receptor signaling, promoting the phosphorylation, ARRB2-mediated internalization and endocytosis of C5AR2. Its function is as follows. Acts as a chemoattractant for neutrophils in chronic inflammation. The protein is Complement C3 of Mus musculus (Mouse).